Reading from the N-terminus, the 234-residue chain is Proteasome subunit alpha type-2 (234 aa).

Alanine 2 bears the N-acetylalanine mark. Position 6 is a phosphotyrosine (tyrosine 6). Serine 7, serine 14, and serine 16 each carry phosphoserine. The residue at position 24 (tyrosine 24) is a Phosphotyrosine. Position 70 is an N6-acetyllysine (lysine 70). Phosphotyrosine is present on residues tyrosine 76 and tyrosine 121. Position 171 is an N6-acetyllysine (lysine 171).

This sequence belongs to the peptidase T1A family. In terms of assembly, the 26S proteasome consists of a 20S proteasome core and two 19S regulatory subunits. The 20S proteasome core is a barrel-shaped complex made of 28 subunits that are arranged in four stacked rings. The two outer rings are each formed by seven alpha subunits, and the two inner rings are formed by seven beta subunits. The proteolytic activity is exerted by three beta-subunits PSMB5, PSMB6 and PSMB7. In terms of processing, phosphorylated on tyrosine residues; which may be important for nuclear import. Detected in liver (at protein level).

It is found in the cytoplasm. Its subcellular location is the nucleus. Component of the 20S core proteasome complex involved in the proteolytic degradation of most intracellular proteins. This complex plays numerous essential roles within the cell by associating with different regulatory particles. Associated with two 19S regulatory particles, forms the 26S proteasome and thus participates in the ATP-dependent degradation of ubiquitinated proteins. The 26S proteasome plays a key role in the maintenance of protein homeostasis by removing misfolded or damaged proteins that could impair cellular functions, and by removing proteins whose functions are no longer required. Associated with the PA200 or PA28, the 20S proteasome mediates ubiquitin-independent protein degradation. This type of proteolysis is required in several pathways including spermatogenesis (20S-PA200 complex) or generation of a subset of MHC class I-presented antigenic peptides (20S-PA28 complex). This is Proteasome subunit alpha type-2 (Psma2) from Mus musculus (Mouse).